We begin with the raw amino-acid sequence, 335 residues long: MAISTFSIGDLGYLRNFLQNECNWFRICKKTFYREYRSVATSSPTFSLNNKPKKFCMHCEIVIFKRSEEFMFSLAVNGIHFGQFLTGKMKFNKKAVPEGLYYYILELGSITPIDLGFIPRYNSDCVTNMRCVTPEVIYENCSIVCPEEANRLTVKGSGDNKLTPLGGCGAWCLKNGGDLYIYTFALAYDLFLTCYDKSTFPSLAKIIFDMIACESEDCVFCKDHNKHVSQAGQIVGCVSNQETCFCYTSCKKKMANINNPELISLLCDQEINKIDIMYPKIKASLSLDINSYAHGYFGDDPYALKCVNWIPVRISAALSRLIVLSCPVCKRVVMD.

It belongs to the herpesviridae cytoplasmic envelopment protein 2 family. As to quaternary structure, interacts with cytoplasmic envelopment protein 3 and with the capsid.

It is found in the virion tegument. Its subcellular location is the host cytoplasm. The protein resides in the host nucleus. Plays a critical role in cytoplasmic virus egress. Participates in the final step of tegumentation and envelope acquisition within the host cytoplasm by directly interacting with the capsid. Upon virion binding to target cell, a signaling cascade is triggered to disrupt the interaction with the capsid, thereby preparing capsid uncoating. The protein is Cytoplasmic envelopment protein 2 (U65) of Human herpesvirus 6A (strain Uganda-1102) (HHV-6 variant A).